The chain runs to 99 residues: MVLAMLGALYPRAGLSLFLFYLILAGALLRPQPQRSQQSVPEEFSAPLELLQPLSGLVDDYGLRPKHPRPGGPRPLLSQAQQRKRDGPNMADYYYDVNL.

Residues 10–29 (YPRAGLSLFLFYLILAGALL) form a helical membrane-spanning segment. Residues 60–90 (DYGLRPKHPRPGGPRPLLSQAQQRKRDGPNM) are disordered.

Interacts with SPPL2C (via active sites); the interaction stabilizes FREY1 protein and inhibits SPPL2C proteolytic activity. Interacts with IZUMO1; the interaction retains IZUMO1 at the endoplasmic reticulum membrane and coordinates IZUMO1 complex assembly. As to expression, expressed in round spermatids (at protein level).

It is found in the endoplasmic reticulum membrane. Its function is as follows. Key regulator for male fertility expressed transiently in round spermatids where it recruits IZUMO1 at the endoplasmic reticulum (ER) membrane and coordinates the oolemmal binding multimeric complex (IZUMO1 complex) assembly. Upon complete assembly of the IZUMO1 complex, its ER retention is released, facilitating IZUMO1 complex export to the acrosome. Through the interaction with SPPL2C, inhibits its intramembrane protease activity directly accessing the catalytic center of an I-CLiP. This is Protein Frey from Mus musculus (Mouse).